We begin with the raw amino-acid sequence, 77 residues long: MVEPIVKRPHYRFEIRKKDTKIGKGFSLKELKESGFSVQEAKKLRVRIDKRRKTSYPENVEVLKKLKEQLQQKKQAQ.

The protein belongs to the eukaryotic ribosomal protein eL13 family.

This chain is Large ribosomal subunit protein eL13, found in Sulfurisphaera tokodaii (strain DSM 16993 / JCM 10545 / NBRC 100140 / 7) (Sulfolobus tokodaii).